The primary structure comprises 145 residues: Putative pre-16S rRNA nuclease (145 aa).

This sequence belongs to the YqgF nuclease family.

The protein resides in the cytoplasm. Its function is as follows. Could be a nuclease involved in processing of the 5'-end of pre-16S rRNA. The chain is Putative pre-16S rRNA nuclease from Tropheryma whipplei (strain Twist) (Whipple's bacillus).